Reading from the N-terminus, the 327-residue chain is GMP reductase (327 aa).

Cys-175 acts as the Thioimidate intermediate in catalysis. 204–227 lines the NADP(+) pocket; sequence IIADGGIRTHGDVAKSIRFGATMV.

The protein belongs to the IMPDH/GMPR family. GuaC type 2 subfamily.

It catalyses the reaction IMP + NH4(+) + NADP(+) = GMP + NADPH + 2 H(+). Catalyzes the irreversible NADPH-dependent deamination of GMP to IMP. It functions in the conversion of nucleobase, nucleoside and nucleotide derivatives of G to A nucleotides, and in maintaining the intracellular balance of A and G nucleotides. The sequence is that of GMP reductase from Bacillus thuringiensis subsp. konkukian (strain 97-27).